The chain runs to 429 residues: Ribosomal RNA small subunit methyltransferase B (429 aa).

Residues 254–260 (CAAPGGK), Asp277, Asp303, and Asp322 each bind S-adenosyl-L-methionine. Cys375 acts as the Nucleophile in catalysis.

It belongs to the class I-like SAM-binding methyltransferase superfamily. RsmB/NOP family.

The protein localises to the cytoplasm. The enzyme catalyses cytidine(967) in 16S rRNA + S-adenosyl-L-methionine = 5-methylcytidine(967) in 16S rRNA + S-adenosyl-L-homocysteine + H(+). Functionally, specifically methylates the cytosine at position 967 (m5C967) of 16S rRNA. This Escherichia coli (strain SMS-3-5 / SECEC) protein is Ribosomal RNA small subunit methyltransferase B.